A 188-amino-acid chain; its full sequence is GTPase KRas (188 aa).

GTP is bound by residues 10 to 18 (GAGGVGKSA), 29 to 35 (VDEYDPT), 59 to 60 (AG), and 116 to 119 (NKCD). The Effector region motif lies at 32-40 (YDPTIEDSY). The disordered stretch occupies residues 167–188 (KEKMSKEGKKKKKKSKTKCVLM). Position 185 is a cysteine methyl ester (Cys185). Cys185 carries the S-farnesyl cysteine lipid modification. The propeptide at 186–188 (VLM) is removed in mature form.

This sequence belongs to the small GTPase superfamily. Ras family.

The protein localises to the cell membrane. It localises to the cytoplasm. It catalyses the reaction GTP + H2O = GDP + phosphate + H(+). Its activity is regulated as follows. Alternates between an inactive form bound to GDP and an active form bound to GTP. Activated by a guanine nucleotide-exchange factor (GEF) and inactivated by a GTPase-activating protein (GAP). Its function is as follows. Ras proteins bind GDP/GTP and possess intrinsic GTPase activity. Plays an important role in the regulation of cell proliferation. May play a role in promoting oncogenic events by inducing transcriptional silencing of tumor suppressor genes (TSGs). This Cyprinus carpio (Common carp) protein is GTPase KRas (kras).